A 292-amino-acid polypeptide reads, in one-letter code: MTDTLKLGVPKGSLQNATIELFKRSGWKINVHSRNYFPDINDAEINCAICRAQEMSIYVENGTLDAGLTGKDWIAENQSDVHVVTDLVYSKVSSRPARWVLAVAGDSPVKTLEDLQGAKIATEMVGFTKRYFAERGIDVEVEFSWGATEAKVVSGLADAIVEVTETESTIRAHGLRIIKELMQTNTQLIANKKAWEDPFKQKKINQLAMMLKSALVAETLVGLKMNVPEEKADDVIAILPSLNAPTVSHLYKSTWLSVEIVVDVSVVRDLIPQLLEKGAEGIVEYSLNKVMF.

It belongs to the ATP phosphoribosyltransferase family. Long subfamily. It depends on Mg(2+) as a cofactor.

The protein resides in the cytoplasm. The catalysed reaction is 1-(5-phospho-beta-D-ribosyl)-ATP + diphosphate = 5-phospho-alpha-D-ribose 1-diphosphate + ATP. Its pathway is amino-acid biosynthesis; L-histidine biosynthesis; L-histidine from 5-phospho-alpha-D-ribose 1-diphosphate: step 1/9. Its activity is regulated as follows. Feedback inhibited by histidine. Functionally, catalyzes the condensation of ATP and 5-phosphoribose 1-diphosphate to form N'-(5'-phosphoribosyl)-ATP (PR-ATP). Has a crucial role in the pathway because the rate of histidine biosynthesis seems to be controlled primarily by regulation of HisG enzymatic activity. The polypeptide is ATP phosphoribosyltransferase (Desulfatibacillum aliphaticivorans).